Reading from the N-terminus, the 135-residue chain is Histone H1, macronuclear (135 aa).

The span at 1–17 (MPAKTATAVKRTTTTKK) shows a compositional bias: low complexity. Residues 1 to 135 (MPAKTATAVK…GGKKKSAKKN (135 aa)) form a disordered region. Composition is skewed to basic residues over residues 18–54 (SAAKRKTSKAVKKAGKRTQSKAKGAQKVKKAATRRTP) and 62–79 (KATKKAGARKASTKRSAT). Positions 80-112 (KKTTAAPAAAAAPATDAPAAAATPSKATGSAKK) are enriched in low complexity. Residues 113 to 135 (ASARKSSAKKPAKGGKKKSAKKN) are compositionally biased toward basic residues.

It is found in the nucleus. The protein localises to the chromosome. Functionally, histones H1 are necessary for the condensation of nucleosome chains into higher-order structures. The chain is Histone H1, macronuclear from Euplotes eurystomus (Ciliate).